Reading from the N-terminus, the 752-residue chain is Photosystem I P700 chlorophyll a apoprotein A1 (752 aa).

Helical transmembrane passes span 73 to 96, 159 to 182, 198 to 222, 294 to 312, 349 to 372, 388 to 414, 436 to 458, and 533 to 551; these read IFAA…FHGA, LYCT…FHYH, LNHH…HVSA, IAHH…GHQY, WHAQ…HHMY, LCIF…IFMV, AIIS…LYIH, and FLIH…LILL. [4Fe-4S] cluster-binding residues include cysteine 575 and cysteine 584. Helical transmembrane passes span 591–612 and 666–688; these read HVFL…HFSW and LSAY…MFLF. Residue histidine 677 coordinates chlorophyll a'. Residues methionine 685 and tyrosine 693 each coordinate chlorophyll a. Tryptophan 694 contacts phylloquinone. Residues 726–746 traverse the membrane as a helical segment; that stretch reads AVGVAHYLLGGIATTWAFFHA.

Belongs to the PsaA/PsaB family. The PsaA/B heterodimer binds the P700 chlorophyll special pair and subsequent electron acceptors. PSI consists of a core antenna complex that captures photons, and an electron transfer chain that converts photonic excitation into a charge separation. The cyanobacterial PSI reaction center is composed of one copy each of PsaA,B,C,D,E,F,I,J,K,L,M and X, and forms trimeric complexes. The cofactor is PSI electron transfer chain: 5 chlorophyll a, 1 chlorophyll a', 2 phylloquinones and 3 4Fe-4S clusters. PSI core antenna: 90 chlorophyll a, 22 carotenoids, 3 phospholipids and 1 galactolipid. P700 is a chlorophyll a/chlorophyll a' dimer, A0 is one or more chlorophyll a, A1 is one or both phylloquinones and FX is a shared 4Fe-4S iron-sulfur center..

Its subcellular location is the cellular thylakoid membrane. The catalysed reaction is reduced [plastocyanin] + hnu + oxidized [2Fe-2S]-[ferredoxin] = oxidized [plastocyanin] + reduced [2Fe-2S]-[ferredoxin]. Functionally, psaA and PsaB bind P700, the primary electron donor of photosystem I (PSI), as well as the electron acceptors A0, A1 and FX. PSI is a plastocyanin/cytochrome c6-ferredoxin oxidoreductase, converting photonic excitation into a charge separation, which transfers an electron from the donor P700 chlorophyll pair to the spectroscopically characterized acceptors A0, A1, FX, FA and FB in turn. Oxidized P700 is reduced on the lumenal side of the thylakoid membrane by plastocyanin or cytochrome c6. This is Photosystem I P700 chlorophyll a apoprotein A1 from Nostoc sp. (strain PCC 7120 / SAG 25.82 / UTEX 2576).